We begin with the raw amino-acid sequence, 709 residues long: Ral guanine nucleotide dissociation stimulator-like 3 (709 aa).

The segment at 26 to 55 (VYSVSLRRQRSQRSTPERSGEGQTPIPATD) is disordered. Positions 64–201 (KVRALRAARL…LLEDFLKEAK (138 aa)) constitute an N-terminal Ras-GEF domain. Disordered regions lie at residues 203 to 225 (EQTE…TPGS), 395 to 416 (SQEE…KLPP), and 502 to 604 (PPAA…SRVP). Positions 248-503 (SVDDVAEQLT…YRVSRVIEPP (256 aa)) constitute a Ras-GEF domain. Low complexity-rich tracts occupy residues 502-511 (PPAASCPSSP) and 533-551 (SSPG…SVSP). S506 and S510 each carry phosphoserine. Positions 552 to 576 (GSPPSSPRNREPPPPGSPPASPGPQ) are enriched in pro residues. A phosphoserine mark is found at S553, S568, S572, S577, and S600. The tract at residues 611–706 (SEARVIRVSI…KEGTGHTLSA (96 aa)) is interaction with HRAS, MRAS and RIT1. A Ras-associating domain is found at 612 to 699 (EARVIRVSIN…GDFLLRRKEG (88 aa)).

As to quaternary structure, interacts with GTP-bound forms of RIT1, HRAS and MRAS. Widely expressed. Expressed at high levels in the liver and kidney.

In terms of biological role, guanine nucleotide exchange factor (GEF) for Ral-A. Potential effector of GTPase HRas and Ras-related protein M-Ras. Negatively regulates Elk-1-dependent gene induction downstream of HRas and MEKK1. The protein is Ral guanine nucleotide dissociation stimulator-like 3 (Rgl3) of Mus musculus (Mouse).